A 434-amino-acid polypeptide reads, in one-letter code: Glutamate-1-semialdehyde 2,1-aminomutase 2 (434 aa).

Lys-270 is modified (N6-(pyridoxal phosphate)lysine).

It belongs to the class-III pyridoxal-phosphate-dependent aminotransferase family. HemL subfamily. In terms of assembly, homodimer. It depends on pyridoxal 5'-phosphate as a cofactor.

Its subcellular location is the cytoplasm. It carries out the reaction (S)-4-amino-5-oxopentanoate = 5-aminolevulinate. It participates in porphyrin-containing compound metabolism; protoporphyrin-IX biosynthesis; 5-aminolevulinate from L-glutamyl-tRNA(Glu): step 2/2. The protein is Glutamate-1-semialdehyde 2,1-aminomutase 2 of Bacillus cereus (strain G9842).